The primary structure comprises 356 residues: MTSSVSTMHNNQDQQTTQLDFITLGIESSCDETGIGLYHSELGLIGHELFSSVKIHAEYGGVVPELASRDHIQRVLPLIKAVLADVKFTLQDLSGIAYTAGPGLAGALLVGCAVAKSLAWSLDIPSLAVHHMEGHLLTPLLEESQPEFPFVALLVSGGHTMLIDVKAIGQYKILGESLDDAVGEAFDKTAKILGLGYPGGPALAMLAEQGNYGAFKFPCPMVGRPGLDFSFSGLKTFVRNTFAKYPSKKEDIAKAFEVATTQTLMIKCRRALEQTKYATLVVAGGVSANLSLRKKLNQMGQKLDVNVFYPRQEFCTDNGAMIALVGYFRLSHGQHDTHHEINIKPRWSLEELSQIE.

Residues H131 and H135 each contribute to the Fe cation site. Residues 154-158 (LVSGG), D187, G200, and N289 each bind substrate. A Fe cation-binding site is contributed by D317.

The protein belongs to the KAE1 / TsaD family. Requires Fe(2+) as cofactor.

It is found in the cytoplasm. The enzyme catalyses L-threonylcarbamoyladenylate + adenosine(37) in tRNA = N(6)-L-threonylcarbamoyladenosine(37) in tRNA + AMP + H(+). Its function is as follows. Required for the formation of a threonylcarbamoyl group on adenosine at position 37 (t(6)A37) in tRNAs that read codons beginning with adenine. Is involved in the transfer of the threonylcarbamoyl moiety of threonylcarbamoyl-AMP (TC-AMP) to the N6 group of A37, together with TsaE and TsaB. TsaD likely plays a direct catalytic role in this reaction. The polypeptide is tRNA N6-adenosine threonylcarbamoyltransferase (Ruthia magnifica subsp. Calyptogena magnifica).